Reading from the N-terminus, the 523-residue chain is Major facilitator-type transporter psiT2 (523 aa).

The segment covering 1–26 (MSLERSTSPNPTERTSLLSDTASTIS) has biased composition (polar residues). The disordered stretch occupies residues 1–45 (MSLERSTSPNPTERTSLLSDTASTISSRDDVEQSSLKQRRTPIPT). The next 5 membrane-spanning stretches (helical) occupy residues 88-108 (FYSG…IFML), 125-145 (ALGI…TMML), 149-169 (VCAG…SELT), 175-195 (ALVV…GPLI), and 221-241 (FLPS…GYFF). The N-linked (GlcNAc...) asparagine glycan is linked to Asn-269. 3 helical membrane-spanning segments follow: residues 317–337 (FLMF…FTAV), 352–372 (AFSV…PWVL), and 382–402 (HFCM…NPLA). An N-linked (GlcNAc...) asparagine glycan is attached at Asn-410. 3 consecutive transmembrane segments (helical) span residues 419–439 (GLLY…VMAF), 455–474 (LATA…AFCP), and 488–508 (NILG…VGVW).

Belongs to the major facilitator superfamily. TCR/Tet family.

Its subcellular location is the membrane. Major facilitator-type transporter; part of the gene cluster that mediates the biosynthesis of psilocybin, a psychotropic tryptamine-derived natural product. This is Major facilitator-type transporter psiT2 from Psilocybe cubensis (Psychedelic mushroom).